Consider the following 392-residue polypeptide: Ceramide phosphoethanolamine synthase (392 aa).

The Lumenal portion of the chain corresponds to 1–10; that stretch reads MIGPSSQISK. Residues 11-31 form a helical membrane-spanning segment; the sequence is ILLTLLFLLIIFYVFMDVELY. The Cytoplasmic portion of the chain corresponds to 32–140; the sequence is LRIHNYAIER…MFDNVIGFSR (109 aa). Over residues 59–82 the composition is skewed to low complexity; the sequence is SESGSGSIGGSSSSSSSSSSSTST. Residues 59–91 are disordered; that stretch reads SESGSGSIGGSSSSSSSSSSSTSTKLPTAGDRQ. Residues 141 to 161 traverse the membrane as a helical segment; the sequence is STFITPNMISFFHVGVACLAG. Residues 162–212 are Lumenal-facing; the sequence is KLVASDSLGYRRLGVLLFQIRTFLDDLDGHVARVRKHIRGERSEIGTSGYY. Residues 213 to 233 form a helical membrane-spanning segment; that stretch reads VDGLCDGLGCIALLLGIFFYL. Residues 234–271 lie on the Cytoplasmic side of the membrane; that stretch reads KNNPPRRGYSIIPMSDSKLPEPTMMIPKMKATTRKVAK. The helical transmembrane segment at 272–288 threads the bilayer; that stretch reads NVISFTGQLLLSSTAWN. Over 289–319 the chain is Lumenal; that stretch reads RYIAVYQNMLEREDVSGNQSHCQDYVFKSTW. A helical transmembrane segment spans residues 320-340; the sequence is FFCVAWMWRIVNVHALLHCVL. Residues 341 to 356 are Cytoplasmic-facing; the sequence is LSIFCDKLWDFLRAIR. A helical transmembrane segment spans residues 357 to 377; the sequence is YSGYIILLVAICLTEMHILEA. Topologically, residues 378–392 are lumenal; sequence QNYIFNSTACSNISL.

It belongs to the CDP-alcohol phosphatidyltransferase class-I family. Mn(2+) is required as a cofactor.

The protein resides in the membrane. The protein localises to the golgi apparatus membrane. It is found in the cell membrane. It carries out the reaction CDP-ethanolamine + an N-acylsphing-4-enine = an N-acylsphing-4-enine 1-phosphoethanolamine + CMP + H(+). The catalysed reaction is CDP-ethanolamine + an N-acyl-sphingoid base = an N-acyl-sphingoid 1-phosphoethanolamine + CMP + H(+). Its function is as follows. Catalyzes the biosynthesis of ceramide phosphoethanolamine (CPE) through the transfer of a phosphatidyl head group from cytidine 5'-diphosphate (CDP)-ethanolamine on to the primary hydroxyl of ceramide. This chain is Ceramide phosphoethanolamine synthase, found in Drosophila melanogaster (Fruit fly).